Reading from the N-terminus, the 212-residue chain is ATP phosphoribosyltransferase (212 aa).

Belongs to the ATP phosphoribosyltransferase family. Short subfamily. Heteromultimer composed of HisG and HisZ subunits.

It localises to the cytoplasm. It carries out the reaction 1-(5-phospho-beta-D-ribosyl)-ATP + diphosphate = 5-phospho-alpha-D-ribose 1-diphosphate + ATP. The protein operates within amino-acid biosynthesis; L-histidine biosynthesis; L-histidine from 5-phospho-alpha-D-ribose 1-diphosphate: step 1/9. Functionally, catalyzes the condensation of ATP and 5-phosphoribose 1-diphosphate to form N'-(5'-phosphoribosyl)-ATP (PR-ATP). Has a crucial role in the pathway because the rate of histidine biosynthesis seems to be controlled primarily by regulation of HisG enzymatic activity. The chain is ATP phosphoribosyltransferase from Clostridium botulinum (strain Okra / Type B1).